A 340-amino-acid polypeptide reads, in one-letter code: DNA-directed RNA polymerase subunit alpha (340 aa).

Residues Met-1–Glu-236 are alpha N-terminal domain (alpha-NTD). The tract at residues Phe-251–Asn-340 is alpha C-terminal domain (alpha-CTD).

Belongs to the RNA polymerase alpha chain family. In terms of assembly, homodimer. The RNAP catalytic core consists of 2 alpha, 1 beta, 1 beta' and 1 omega subunit. When a sigma factor is associated with the core the holoenzyme is formed, which can initiate transcription.

It catalyses the reaction RNA(n) + a ribonucleoside 5'-triphosphate = RNA(n+1) + diphosphate. In terms of biological role, DNA-dependent RNA polymerase catalyzes the transcription of DNA into RNA using the four ribonucleoside triphosphates as substrates. The sequence is that of DNA-directed RNA polymerase subunit alpha from Rickettsia africae (strain ESF-5).